The sequence spans 251 residues: Hydroxyacylglutathione hydrolase (251 aa).

Zn(2+)-binding residues include histidine 53, histidine 55, aspartate 57, histidine 58, histidine 110, aspartate 127, and histidine 165.

This sequence belongs to the metallo-beta-lactamase superfamily. Glyoxalase II family. As to quaternary structure, monomer. Zn(2+) is required as a cofactor.

The catalysed reaction is an S-(2-hydroxyacyl)glutathione + H2O = a 2-hydroxy carboxylate + glutathione + H(+). It participates in secondary metabolite metabolism; methylglyoxal degradation; (R)-lactate from methylglyoxal: step 2/2. Thiolesterase that catalyzes the hydrolysis of S-D-lactoyl-glutathione to form glutathione and D-lactic acid. This Escherichia coli O45:K1 (strain S88 / ExPEC) protein is Hydroxyacylglutathione hydrolase.